The following is a 168-amino-acid chain: Small ribosomal subunit protein uS5 (168 aa).

The S5 DRBM domain maps to 17 to 80 (IEDQLVAVNR…EDGKKKMINV (64 aa)).

This sequence belongs to the universal ribosomal protein uS5 family. As to quaternary structure, part of the 30S ribosomal subunit. Contacts proteins S4 and S8.

Functionally, with S4 and S12 plays an important role in translational accuracy. In terms of biological role, located at the back of the 30S subunit body where it stabilizes the conformation of the head with respect to the body. This Lactobacillus helveticus (strain DPC 4571) protein is Small ribosomal subunit protein uS5.